A 406-amino-acid chain; its full sequence is MGSPDSSSGSAQKPPRHQHQHQPPPPRRQGSAPELPPGFRFHPTDEELVVHYLKKKAAKAPLPVTIIAEVDLYKFDPWELPEKATFGEHEWYFFSPRDRKYANGARPNRAATSGYWKATGTDKPILASATGCGREKVGVKKALVFYRGKPPRGLKTNWIMHEYRLTGASAGSTTTSRPPPVTGGSRAPASLRLDDWVLCRIYKKTSKAAAAVGDEQRSMECEDSVEDAVTAYPPYATAGMAGAGAHGSNYVQLLHHHDSHEDNFQLDGLLTEHDVGLSAGAASLGHLAAAARATKQFLAPSSSTPFNWLEASTGGSILPQARNFPGFNRSRNVGSMSLSSTADDMAGAVDVSDGGNAVNAMYLPVQDGTYHQHVILGAPLAPEAIAGAATSGFQHHVQISGVNWNP.

The segment covering M1–A11 has biased composition (polar residues). The interval M1–R40 is disordered. The NAC domain maps to L35–K204. A DNA-binding region spans residues V137 to A210.

It is found in the nucleus. Transcription factor of the NAC family associated with the grain protein content (GPC). Accelerates senescence and increases nutrient remobilization from leaves to developing grains. Sequences of 11 European varieties of H.vulgare tested belongs to the same haplotype while the sequence found in H.spontaneum, an ancestor of the cultivated H.vulgare which has a higher GPC, belongs to an other haplotype. This Hordeum vulgare subsp. vulgare (Domesticated barley) protein is NAC transcription factor NAM-1 (NAM-1).